A 312-amino-acid polypeptide reads, in one-letter code: Aspartate carbamoyltransferase catalytic subunit (312 aa).

Residues arginine 58 and threonine 59 each coordinate carbamoyl phosphate. Lysine 86 is an L-aspartate binding site. Carbamoyl phosphate is bound by residues arginine 108, histidine 136, and glutamine 139. The L-aspartate site is built by arginine 169 and arginine 223. Residues glycine 264 and proline 265 each coordinate carbamoyl phosphate.

This sequence belongs to the aspartate/ornithine carbamoyltransferase superfamily. ATCase family. Heterododecamer (2C3:3R2) of six catalytic PyrB chains organized as two trimers (C3), and six regulatory PyrI chains organized as three dimers (R2).

It carries out the reaction carbamoyl phosphate + L-aspartate = N-carbamoyl-L-aspartate + phosphate + H(+). It functions in the pathway pyrimidine metabolism; UMP biosynthesis via de novo pathway; (S)-dihydroorotate from bicarbonate: step 2/3. Its function is as follows. Catalyzes the condensation of carbamoyl phosphate and aspartate to form carbamoyl aspartate and inorganic phosphate, the committed step in the de novo pyrimidine nucleotide biosynthesis pathway. This chain is Aspartate carbamoyltransferase catalytic subunit, found in Endomicrobium trichonymphae.